The primary structure comprises 142 residues: Large ribosomal subunit protein uL11 (142 aa).

The protein belongs to the universal ribosomal protein uL11 family. In terms of assembly, part of the ribosomal stalk of the 50S ribosomal subunit. Interacts with L10 and the large rRNA to form the base of the stalk. L10 forms an elongated spine to which L12 dimers bind in a sequential fashion forming a multimeric L10(L12)X complex. In terms of processing, one or more lysine residues are methylated.

Its function is as follows. Forms part of the ribosomal stalk which helps the ribosome interact with GTP-bound translation factors. The chain is Large ribosomal subunit protein uL11 from Lachnoclostridium phytofermentans (strain ATCC 700394 / DSM 18823 / ISDg) (Clostridium phytofermentans).